The primary structure comprises 578 residues: Probable methylcrotonoyl-CoA carboxylase beta chain, mitochondrial (578 aa).

Residues M1–V29 constitute a mitochondrion transit peptide. Residues M48 to L305 enclose the CoA carboxyltransferase N-terminal domain. The carboxyltransferase stretch occupies residues M48 to E570. The CoA carboxyltransferase C-terminal domain occupies A321–E570. The acyl-CoA binding stretch occupies residues D355 to N388.

Belongs to the AccD/PCCB family. In terms of tissue distribution, expressed in third instar larval ring gland (lateral and medial secretory cells and corpus cardiacum cells) and CNS.

The protein resides in the mitochondrion matrix. The catalysed reaction is 3-methylbut-2-enoyl-CoA + hydrogencarbonate + ATP = 3-methyl-(2E)-glutaconyl-CoA + ADP + phosphate + H(+). The protein operates within amino-acid degradation; L-leucine degradation; (S)-3-hydroxy-3-methylglutaryl-CoA from 3-isovaleryl-CoA: step 2/3. Carboxyltransferase subunit of the 3-methylcrotonyl-CoA carboxylase, an enzyme that catalyzes the conversion of 3-methylcrotonyl-CoA to 3-methylglutaconyl-CoA, a critical step for leucine and isovaleric acid catabolism. Vital for adult survival. This Drosophila melanogaster (Fruit fly) protein is Probable methylcrotonoyl-CoA carboxylase beta chain, mitochondrial.